An 89-amino-acid chain; its full sequence is Small ribosomal subunit protein uS15 (89 aa).

Residues 1 to 21 (MALTTEEKKQVLSEYGLHETD) show a composition bias toward basic and acidic residues. The disordered stretch occupies residues 1–24 (MALTTEEKKQVLSEYGLHETDTGS).

It belongs to the universal ribosomal protein uS15 family. Part of the 30S ribosomal subunit. Forms a bridge to the 50S subunit in the 70S ribosome, contacting the 23S rRNA.

Functionally, one of the primary rRNA binding proteins, it binds directly to 16S rRNA where it helps nucleate assembly of the platform of the 30S subunit by binding and bridging several RNA helices of the 16S rRNA. Its function is as follows. Forms an intersubunit bridge (bridge B4) with the 23S rRNA of the 50S subunit in the ribosome. In Rhodococcus opacus (strain B4), this protein is Small ribosomal subunit protein uS15.